Here is a 682-residue protein sequence, read N- to C-terminus: Methionine--tRNA ligase (682 aa).

The 'HIGH' region motif lies at P14 to H24. Residues C145, C148, C158, and C161 each coordinate Zn(2+). A 'KMSKS' region motif is present at residues K331–S335. K334 contacts ATP. The region spanning A580–K682 is the tRNA-binding domain.

It belongs to the class-I aminoacyl-tRNA synthetase family. MetG type 1 subfamily. In terms of assembly, homodimer. Zn(2+) is required as a cofactor.

The protein localises to the cytoplasm. It catalyses the reaction tRNA(Met) + L-methionine + ATP = L-methionyl-tRNA(Met) + AMP + diphosphate. Its function is as follows. Is required not only for elongation of protein synthesis but also for the initiation of all mRNA translation through initiator tRNA(fMet) aminoacylation. The chain is Methionine--tRNA ligase from Pseudomonas syringae pv. syringae (strain B728a).